The primary structure comprises 245 residues: Ribosomal RNA large subunit methyltransferase E (245 aa).

The S-adenosyl-L-methionine site is built by glycine 83, tryptophan 85, aspartate 111, aspartate 127, and aspartate 156. The active-site Proton acceptor is the lysine 196.

The protein belongs to the class I-like SAM-binding methyltransferase superfamily. RNA methyltransferase RlmE family.

The protein resides in the cytoplasm. It catalyses the reaction uridine(2552) in 23S rRNA + S-adenosyl-L-methionine = 2'-O-methyluridine(2552) in 23S rRNA + S-adenosyl-L-homocysteine + H(+). Specifically methylates the uridine in position 2552 of 23S rRNA at the 2'-O position of the ribose in the fully assembled 50S ribosomal subunit. This Polaromonas naphthalenivorans (strain CJ2) protein is Ribosomal RNA large subunit methyltransferase E.